A 226-amino-acid polypeptide reads, in one-letter code: LexA repressor (226 aa).

Residues 42–62 (MREIGDAVGLASLSSVTHQLN) constitute a DNA-binding region (H-T-H motif). Catalysis depends on for autocatalytic cleavage activity residues Ser150 and Lys187.

It belongs to the peptidase S24 family. As to quaternary structure, homodimer.

It carries out the reaction Hydrolysis of Ala-|-Gly bond in repressor LexA.. Represses a number of genes involved in the response to DNA damage (SOS response), including recA and lexA. In the presence of single-stranded DNA, RecA interacts with LexA causing an autocatalytic cleavage which disrupts the DNA-binding part of LexA, leading to derepression of the SOS regulon and eventually DNA repair. The protein is LexA repressor of Clavibacter sepedonicus (Clavibacter michiganensis subsp. sepedonicus).